The primary structure comprises 638 residues: LIM domain kinase 2 (638 aa).

2 consecutive LIM zinc-binding domains span residues 12–63 (CRGC…CHKD) and 72–124 (CHGC…CGKC). Residues 152 to 239 (LISMPATTEC…TLQLLIEHDP (88 aa)) enclose the PDZ domain. At T210 the chain carries Phosphothreonine. Over residues 257–266 (MQSSGHTLML) the composition is skewed to polar residues. The disordered stretch occupies residues 257 to 304 (MQSSGHTLMLSTLDAKENQEGTLRRRSLRRSNSISKSPGPSSPKEPLL). Over residues 270–279 (DAKENQEGTL) the composition is skewed to basic and acidic residues. Low complexity predominate over residues 286-304 (RSNSISKSPGPSSPKEPLL). 2 positions are modified to phosphoserine: S293 and S298. The 278-residue stretch at 331–608 (LIHGEVLGKG…DSFEALSLFL (278 aa)) folds into the Protein kinase domain. Residues 337 to 345 (LGKGFFGQA) and K360 each bind ATP. The active site involves D451. A Phosphothreonine; by ROCK1 and CDC42BP modification is found at T505.

The protein belongs to the protein kinase superfamily. TKL Ser/Thr protein kinase family. In terms of assembly, binds ROCK1 and MARF1. Interacts with NISCH. In terms of processing, phosphorylated on serine and/or threonine residues by ROCK1. In terms of tissue distribution, found in various tissues at moderate levels, except for testis, which shows very low expression.

The protein localises to the cytoplasm. It localises to the nucleus. It is found in the perinuclear region. The protein resides in the cytoskeleton. Its subcellular location is the spindle. The protein localises to the microtubule organizing center. It localises to the centrosome. It catalyses the reaction L-seryl-[protein] + ATP = O-phospho-L-seryl-[protein] + ADP + H(+). The catalysed reaction is L-threonyl-[protein] + ATP = O-phospho-L-threonyl-[protein] + ADP + H(+). Functionally, serine/threonine-protein kinase that plays an essential role in the regulation of actin filament dynamics. Acts downstream of several Rho family GTPase signal transduction pathways. Involved in astral microtubule organization and mitotic spindle orientation during early stages of mitosis by mediating phosphorylation of TPPP. Displays serine/threonine-specific phosphorylation of myelin basic protein and histone (MBP) in vitro. Suppresses ciliogenesis via multiple pathways; phosphorylation of CFL1, directional trafficking of ciliary vesicles to the ciliary base, and by facilitating YAP1 nuclear localization where it acts as a transcriptional corepressor of the TEAD4 target genes AURKA and PLK1. The sequence is that of LIM domain kinase 2 (Limk2) from Rattus norvegicus (Rat).